Consider the following 115-residue polypeptide: UPF0102 protein NMA0341 (115 aa).

The protein belongs to the UPF0102 family.

In Neisseria meningitidis serogroup A / serotype 4A (strain DSM 15465 / Z2491), this protein is UPF0102 protein NMA0341.